We begin with the raw amino-acid sequence, 235 residues long: Calcium-activated potassium channel subunit beta-2 (235 aa).

The ball and chain stretch occupies residues 1-45 (MFIWTSGRTSSSYRHDEKRNIYQKIRDHDLLDKRKTVTALKAGED). Residues 1-46 (MFIWTSGRTSSSYRHDEKRNIYQKIRDHDLLDKRKTVTALKAGEDR) are Cytoplasmic-facing. The helical transmembrane segment at 47-67 (AILLGLAMMVCSIMMYFLLGI) threads the bilayer. At 68-194 (TLLRSYMQSV…VILTKLYSSN (127 aa)) the chain is on the extracellular side. 3 N-linked (GlcNAc...) asparagine glycosylation sites follow: Asn88, Asn96, and Asn119. A helical transmembrane segment spans residues 195-215 (VLFHSLFWPTCMMAGGVAIVA). At 216 to 235 (MVKLTQYLSLLCERIQRINR) the chain is on the cytoplasmic side.

It belongs to the KCNMB (TC 8.A.14.1) family. KCNMB2 subfamily. In terms of assembly, interacts with KCNMA1 tetramer. There are probably 4 molecules of KCMNB2 per KCNMA1 tetramer. In terms of processing, N-glycosylated. In terms of tissue distribution, highly expressed in brain and heart. Also expressed in lung.

The protein localises to the membrane. Regulatory subunit of the calcium activated potassium KCNMA1 (maxiK) channel. Modulates the calcium sensitivity and gating kinetics of KCNMA1, thereby contributing to KCNMA1 channel diversity. Acts as a negative regulator that confers rapid and complete inactivation of KCNMA1 channel complex. This is Calcium-activated potassium channel subunit beta-2 (Kcnmb2) from Rattus norvegicus (Rat).